Here is a 263-residue protein sequence, read N- to C-terminus: uncharacterized protein (263 aa).

This sequence belongs to the AtsA family.

Its subcellular location is the plastid. It localises to the chloroplast. This is an uncharacterized protein from Pyropia yezoensis (Susabi-nori).